The sequence spans 114 residues: Propane 2-monooxygenase, effector component (114 aa).

The protein belongs to the TmoD/XamoD family. As to quaternary structure, the propane 2-monooxygenase multicomponent enzyme system is composed of an electron transfer component and a monooxygenase component interacting with the effector protein MimD. The electron transfer component is composed of a reductase (MimB), and the monooxygenase component is formed by a large subunit (MimA) and a small subunit (MimC).

Functionally, effector component of the propane 2-monooxygenase multicomponent enzyme system which is involved in the degradation of propane via the O2-dependent hydroxylation of propane. This chain is Propane 2-monooxygenase, effector component, found in Mycolicibacterium smegmatis (strain ATCC 700084 / mc(2)155) (Mycobacterium smegmatis).